The chain runs to 768 residues: DNA replication licensing factor MCM3 homolog 1 (768 aa).

The region spanning 290–497 is the MCM domain; it reads TFDLLGNSLA…IDRQISEHVA (208 aa). ATP is bound at residue 340-347; sequence GDPSVAKS. Residues 472–475 carry the Arginine finger motif; sequence SRFD. Residues 662–687 are disordered; the sequence is MKQQAEHDAGATGGTVDGHGSSGNDP. A compositionally biased stretch (gly residues) spans 672 to 682; it reads ATGGTVDGHGS.

It belongs to the MCM family.

Its subcellular location is the nucleus. The enzyme catalyses ATP + H2O = ADP + phosphate + H(+). In terms of biological role, acts as a factor that allows the DNA to undergo a single round of replication per cell cycle. Required for DNA replication and cell proliferation. May act as a component of the MCM complex which is the putative replicative helicase of the replication licensing system in eukaryotic cells. This chain is DNA replication licensing factor MCM3 homolog 1 (ROA1), found in Zea mays (Maize).